The chain runs to 118 residues: Vacuolar ATPase assembly integral membrane protein vma-21 (118 aa).

Topologically, residues 1 to 35 are cytoplasmic; sequence MATRRIISQEKTLLEKDDRIGSSPAASEKSNITPA. The helical transmembrane segment at 36–56 threads the bilayer; sequence VPASVIIKLLAFTFAMIVIPI. Over 57-73 the chain is Lumenal; it reads SSYFLTVDRLFKGNSTY. A helical transmembrane segment spans residues 74 to 94; it reads AGATAAIMANVVLIGYIIVAM. Topologically, residues 95 to 118 are cytoplasmic; sequence AEDQSDQENEKKGGGGKGEGKKDL. The disordered stretch occupies residues 98 to 118; that stretch reads QSDQENEKKGGGGKGEGKKDL. Residues 102 to 118 are compositionally biased toward basic and acidic residues; it reads ENEKKGGGGKGEGKKDL. The Prevents secretion from ER signature appears at 115 to 118; it reads KKDL.

It belongs to the VMA21 family.

Its subcellular location is the endoplasmic reticulum membrane. The protein resides in the endoplasmic reticulum-Golgi intermediate compartment membrane. The protein localises to the cytoplasmic vesicle. It localises to the COPII-coated vesicle membrane. Functionally, required for the assembly of the V0 complex of the vacuolar ATPase (V-ATPase) in the endoplasmic reticulum. In Neurospora crassa (strain ATCC 24698 / 74-OR23-1A / CBS 708.71 / DSM 1257 / FGSC 987), this protein is Vacuolar ATPase assembly integral membrane protein vma-21 (vma-21).